The following is a 588-amino-acid chain: A-type ATP synthase subunit A 3 (588 aa).

Position 234–241 (234–241 (GPFGSGKT)) interacts with ATP.

Belongs to the ATPase alpha/beta chains family. Has multiple subunits with at least A(3), B(3), C, D, E, F, H, I and proteolipid K(x).

It localises to the cell membrane. It catalyses the reaction ATP + H2O + 4 H(+)(in) = ADP + phosphate + 5 H(+)(out). Its function is as follows. Component of the A-type ATP synthase that produces ATP from ADP in the presence of a proton gradient across the membrane. The A chain is the catalytic subunit. This Methanospirillum hungatei JF-1 (strain ATCC 27890 / DSM 864 / NBRC 100397 / JF-1) protein is A-type ATP synthase subunit A 3.